We begin with the raw amino-acid sequence, 1133 residues long: Fas-binding factor 1 (1133 aa).

2 disordered regions span residues 89–198 and 211–544; these read LGLK…TPIR and IMAT…VPVQ. Basic and acidic residues predominate over residues 102–113; that stretch reads AAKDPGKGELPN. Over residues 125–134 the composition is skewed to low complexity; that stretch reads KKSLPSPSSS. S142 carries the phosphoserine modification. Positions 165–182 are enriched in polar residues; it reads PPVTQSKTASDKSPSTVR. 2 stretches are compositionally biased toward basic and acidic residues: residues 221–245 and 259–276; these read PKAEKRQIGDQEGPRPARSTLDELL and TGEHREFKLDKKYQRPQD. Acidic residues predominate over residues 277-286; the sequence is SEDMWGDEDF. Residues 295–310 show a composition bias toward low complexity; the sequence is VVSSEGRQSRRQSVSR. A compositionally biased stretch (polar residues) spans 325-336; it reads SKQSPPMASSPI. Positions 415–424 are enriched in basic and acidic residues; that stretch reads ASKEEKEDWL. Polar residues predominate over residues 459-469; that stretch reads SGSQPLTSTQG. The span at 473-482 shows a compositional bias: low complexity; sequence AAAGGSSGTT. 2 coiled-coil regions span residues 577-727 and 773-870; these read AELQ…VDAA and IRQR…EEQK. A Glycyl lysine isopeptide (Lys-Gly) (interchain with G-Cter in SUMO2) cross-link involves residue K960. Positions 1062 to 1085 are disordered; sequence AASSQSALMPPAPTTRWCSQPPTG.

May interact with FAS cytoplasmic domain. Interacts with PARD3. Interacts with TRAPPC14. Present in various epithelial cells (at protein level).

The protein resides in the cytoplasm. The protein localises to the cytoskeleton. It is found in the microtubule organizing center. Its subcellular location is the centrosome. It localises to the centriole. The protein resides in the spindle pole. The protein localises to the cell junction. In terms of biological role, keratin-binding protein required for epithelial cell polarization. Involved in apical junction complex (AJC) assembly via its interaction with PARD3. Required for ciliogenesis. This Homo sapiens (Human) protein is Fas-binding factor 1 (FBF1).